Here is a 155-residue protein sequence, read N- to C-terminus: Large ribosomal subunit protein uL22 (155 aa).

The protein belongs to the universal ribosomal protein uL22 family. Part of the 50S ribosomal subunit. Contacts the macrolide antibiotic tylosin in the polypeptide exit tunnel.

Functionally, this protein binds specifically to 23S rRNA. It makes multiple contacts with different domains of the 23S rRNA in the assembled 50S subunit and ribosome. Contacts all 6 domains of the 23S rRNA, helping stabilize their relative orientation. An extended beta-hairpin in the C-terminus forms part of the polypeptide exit tunnel, in which it helps forms a bend with protein L4, while most of the rest of the protein is located at the polypeptide exit tunnel on the outside of the subunit. The polypeptide is Large ribosomal subunit protein uL22 (Haloarcula marismortui (strain ATCC 43049 / DSM 3752 / JCM 8966 / VKM B-1809) (Halobacterium marismortui)).